The chain runs to 201 residues: ADP-ribosylation factor-like protein 4D (201 aa).

The N-myristoyl glycine moiety is linked to residue Gly-2. GTP-binding positions include 28–35, 76–80, and 135–138; these read GLDSAGKT, DVGGQ, and NKQD.

It belongs to the small GTPase superfamily. Arf family. In terms of assembly, interacts with CYTH2; the interaction is direct and ARL4D GTP-dependent. Does not interact with ARL4D.

It localises to the nucleus. The protein resides in the nucleolus. It is found in the cell membrane. The protein localises to the cytoplasm. In terms of biological role, small GTP-binding protein which cycles between an inactive GDP-bound and an active GTP-bound form, and the rate of cycling is regulated by guanine nucleotide exchange factors (GEF) and GTPase-activating proteins (GAP). GTP-binding protein that does not act as an allosteric activator of the cholera toxin catalytic subunit. Recruits CYTH1, CYTH2, CYTH3 and CYTH4 to the plasma membrane in GDP-bound form. This chain is ADP-ribosylation factor-like protein 4D (Arl4d), found in Mus musculus (Mouse).